A 491-amino-acid chain; its full sequence is Spermatogenesis-defective protein 39 homolog (491 aa).

Phosphothreonine is present on T21. Over residues 72 to 81 (KETAGSSGST) the composition is skewed to polar residues. The tract at residues 72-101 (KETAGSSGSTPEGREQLKGRNSFYTQLPKP) is disordered. T115 is subject to Phosphothreonine. 3 positions are modified to phosphoserine: S119, S122, and S128. Residues 121–141 (QSLSDALSDTPAKSYAPELGR) form a disordered region. The residue at position 130 (T130) is a Phosphothreonine.

It belongs to the SPE39 family. In terms of assembly, interacts with VPS33B. Associates with the homotypic fusion and vacuole protein sorting (HOPS) complex; impaired by VPS33B. Interacts with RAB11A.

It is found in the cytoplasm. It localises to the cytoplasmic vesicle. The protein localises to the early endosome. The protein resides in the recycling endosome. Its subcellular location is the late endosome. Its function is as follows. Proposed to be involved in endosomal maturation implicating in part VPS33B. In epithelial cells, the VPS33B:VIPAS39 complex may play a role in the apical RAB11A-dependent recycling pathway and in the maintenance of the apical-basolateral polarity. May play a role in lysosomal trafficking, probably via association with the core HOPS complex in a discrete population of endosomes; the functions seems to be independent of VPS33B. May play a role in vesicular trafficking during spermatogenesis. May be involved in direct or indirect transcriptional regulation of E-cadherin. This is Spermatogenesis-defective protein 39 homolog (Vipas39) from Mus musculus (Mouse).